The sequence spans 590 residues: MNAFLLQLAIYLVVLLVLAKPLGAYMTGVFGDKPSRAHWLGPVERLFYRVAGVNPQAEMGWKHYALAVIVVNVLGALAVYALQRAQQWLPLNPQGFGAVTPDSSFNTAVSFVTNTNWQGYSGESTMSYLTQMLGLAVQNFLSAATGIAVVIALIRGFARHSANTIGNFWVDFTRSTVYVLLPLSIIVSVFFVSQGVIQNFDGYKEVTTVTATTYDNPKMDASGQPIKDAQGNPVTEKATTQTQTLPMGPIASQEAIKMIGTNGGGPFNANSAHPYENPNALTNFVQMLAIFIIPAALCFTFGGMVGDGRQGWAVLAAMTVLFVVLAVFLAWAELHPNPMLANLGIDEAVGNMEGKETRFGIVASSLFATITTAASCGAVNAMHDSLTALGGFVPMFLMQLGEVVFGGVGSGLYGMLVYAILAVFIAGLMIGRTPEYLGKKIEVFEMKMTSIAILVTPLLVLVGTAVAVVVTQGKAGIFNPGTHGFSEVLYAFSSAANNNGSAFAGLSANTPFYNLALGICMWLGRFWIIVPVLAMAGTFAAKKRLPVTAGTLPTHGPLFVVLLIGSVLLVGALTYIPALALGPIAEHLAR.

The next 12 helical transmembrane spans lie at 3 to 23, 63 to 83, 134 to 154, 177 to 197, 284 to 304, 312 to 332, 359 to 379, 388 to 408, 411 to 431, 451 to 471, 515 to 535, and 558 to 578; these read AFLL…KPLG, HYAL…YALQ, GLAV…IALI, VYVL…QGVI, FVQM…FGGM, WAVL…LAWA, FGIV…CGAV, ALGG…FGGV, GLYG…LMIG, IAIL…VVVT, LALG…VLAM, and LFVV…YIPA.

The protein belongs to the KdpA family. The system is composed of three essential subunits: KdpA, KdpB and KdpC.

It is found in the cell inner membrane. In terms of biological role, part of the high-affinity ATP-driven potassium transport (or Kdp) system, which catalyzes the hydrolysis of ATP coupled with the electrogenic transport of potassium into the cytoplasm. This subunit binds the periplasmic potassium ions and delivers the ions to the membrane domain of KdpB through an intramembrane tunnel. In Ralstonia pickettii (strain 12J), this protein is Potassium-transporting ATPase potassium-binding subunit.